The following is a 475-amino-acid chain: MSPKTETKASVGFKAGVKDYRLTYYTPEYQTKDTDILAAFRVTPQPGVPPEEAGAAVAAESSTGTWTTVWTDGLTSLDRYKGRCYDIEPVPGEESQFIAYVAYPLDLFEEGSVTNLFTSIVGNVFGFKALRALRLEDLRIPPSYSKTFQGPPHGIQVERDKLNKYGRPLLGCTIKPKLGLSAKNYGRAVYECLRGGLDFTKDDENVNSQPFMRWRDRFVFCAEALNKAQAETGEIKGHYLNATAGTCEEMMKRAIFARELGVPIVMHDYLTGGFTANTSLAHYCRDNGLLLHIHRAMHAVIDRQRNHGMHFRVLAKALRMSGGDHIHAGTVVGKLEGERDVTLGFVDLLRDDFIEKDRSRGIYFTQDWVSMPGVLPVASGGIHVWHMPALTEIFGDDSVLQFGGGTLGHPWGNAPGAVANRVAVEACVQARNEGRDLAREGNEVIREAAKWSPELAAACEVWKEIKFEFETIDYL.

Positions 1 to 2 (MS) are excised as a propeptide. P3 carries the post-translational modification N-acetylproline. The residue at position 14 (K14) is an N6,N6,N6-trimethyllysine. Substrate-binding residues include N123 and T173. The active-site Proton acceptor is the K175. K177 provides a ligand contact to substrate. K201, D203, and E204 together coordinate Mg(2+). Position 201 is an N6-carboxylysine (K201). Catalysis depends on H294, which acts as the Proton acceptor. Substrate is bound by residues R295, H327, and S379.

It belongs to the RuBisCO large chain family. Type I subfamily. In terms of assembly, heterohexadecamer of 8 large chains and 8 small chains; disulfide-linked. The disulfide link is formed within the large subunit homodimers. Requires Mg(2+) as cofactor. Post-translationally, the disulfide bond which can form in the large chain dimeric partners within the hexadecamer appears to be associated with oxidative stress and protein turnover.

Its subcellular location is the plastid. It localises to the chloroplast. It catalyses the reaction 2 (2R)-3-phosphoglycerate + 2 H(+) = D-ribulose 1,5-bisphosphate + CO2 + H2O. It carries out the reaction D-ribulose 1,5-bisphosphate + O2 = 2-phosphoglycolate + (2R)-3-phosphoglycerate + 2 H(+). Its function is as follows. RuBisCO catalyzes two reactions: the carboxylation of D-ribulose 1,5-bisphosphate, the primary event in carbon dioxide fixation, as well as the oxidative fragmentation of the pentose substrate in the photorespiration process. Both reactions occur simultaneously and in competition at the same active site. This chain is Ribulose bisphosphate carboxylase large chain, found in Keteleeria davidiana (David's keteleeria).